The chain runs to 248 residues: Large ribosomal subunit protein uL10m (248 aa).

Residues 1–24 (MATLIQRSLSLAKSSTPALQFLRF) constitute a mitochondrion transit peptide.

The protein belongs to the universal ribosomal protein uL10 family. Component of the mitochondrial ribosome large subunit (39S) which comprises a 16S rRNA and about 50 distinct proteins.

The protein resides in the mitochondrion. This Drosophila melanogaster (Fruit fly) protein is Large ribosomal subunit protein uL10m (mRpL10).